The following is a 1204-amino-acid chain: Exportin-5 (1204 aa).

The segment at 1–108 (MEMEQVNALC…ANGTLRILEE (108 aa)) is necessary for interaction with Ran. K396 carries the post-translational modification N6-acetyllysine. A necessary for interaction with ILF3 region spans residues 533–640 (ELLQLVLNFE…KQLLSNELLL (108 aa)). Residues 641–642 (TQ) are pre-siRNA binding.

The protein belongs to the exportin family. As to quaternary structure, component of a nuclear export receptor complex composed of XPO5, RAN, dsRNA-binding proteins and dsRNA. Found in a nuclear export complex with XPO5, RAN, EEF1A1, and aminoacylated tRNA. Found in a nuclear export complex with XPO5, RAN, ILF3 and dsRNA. Found in a nuclear export complex with XPO5, RAN and pre-miRNA. Found in a nuclear export complex with XPO5, RAN, ILF3 and minihelix VA1 dsRNA. Found in a nuclear export complex with XPO5, RAN, ILF3, ZNF346 and dsRNA. Interacts with EEF1A1, ILF3, NUP153, NUP214 and ZNF346. Interacts with RAN and cargo proteins in a GTP-dependent manner. Interacts with ADAR/ADAR1 (via DRBM domains). Interacts with SMAD4; mediates nuclear export of SMAD4. Interacts with RAN (GTP-bound form).

The protein resides in the nucleus. The protein localises to the cytoplasm. Mediates the nuclear export of proteins bearing a double-stranded RNA binding domain (dsRBD) and double-stranded RNAs (cargos). XPO5 in the nucleus binds cooperatively to the RNA and to the GTPase Ran in its active GTP-bound form. Proteins containing dsRBDs can associate with this trimeric complex through the RNA. Docking of this complex to the nuclear pore complex (NPC) is mediated through binding to nucleoporins. Upon transit of a nuclear export complex into the cytoplasm, hydrolysis of Ran-GTP to Ran-GDP (induced by RANBP1 and RANGAP1, respectively) cause disassembly of the complex and release of the cargo from the export receptor. XPO5 then returns to the nuclear compartment by diffusion through the nuclear pore complex, to mediate another round of transport. The directionality of nuclear export is thought to be conferred by an asymmetric distribution of the GTP- and GDP-bound forms of Ran between the cytoplasm and nucleus. Overexpression may in some circumstances enhance RNA-mediated gene silencing (RNAi). Mediates nuclear export of ADAR/ADAR1 in a RanGTP-dependent manner. Its function is as follows. Mediates the nuclear export of micro-RNA precursors, which form short hairpins. Also mediates the nuclear export of synthetic short hairpin RNAs used for RNA interference. In some circumstances can also mediate the nuclear export of deacylated and aminoacylated tRNAs. Specifically recognizes dsRNAs that lack a 5'-overhang in a sequence-independent manner, have only a short 3'-overhang, and that have a double-stranded length of at least 15 base-pairs. Binding is dependent on Ran-GTP. The protein is Exportin-5 (Xpo5) of Mus musculus (Mouse).